A 501-amino-acid polypeptide reads, in one-letter code: MSNEEINIHEAEEQLSEQEMLRRQKLVELQEAGKDPFDVYKVERTHSSADVKDNFEELEGKEVKVAGRLMSKRGQGKVVFADLADLPGKIQLFIKIDNVGEEALKEFKTFDLGDWVAATGEVFKTKMGEVSVKVTSFELICKSLKPLPEKWHGLKDPDLRYRQREVDIITNPEVKDTFIKRSQIVKAIREFLDNRGFLEVDTPILSPIAGGAAARPFITHHNALDIDMYLRIATELYLKRLIVAGFEKVYEMGKNFRNEGVSVRHNPEFTAIELYEAYADYNDMMEIMENMIAYVCEKVNGSTKVTYEGTEIDFTPPWRRITMVDAVKEFAGIDFNEIKSDEEAQAIAKEKNLEFPKPLDKVTKGEVLNMLFEEYGEDKLIQPTFLIDYPVEISPLTKKKRGNEMFTERFEGFVYGREVCNAYSELNDPIVQRERFEQQAREREYGDDEAYMLDEEFMSALETGMPPTGGLGIGIDRMIMFLTDSSSIRDVILFPTMKPQK.

Mg(2+)-binding residues include glutamate 411 and glutamate 418.

Belongs to the class-II aminoacyl-tRNA synthetase family. In terms of assembly, homodimer. Mg(2+) is required as a cofactor.

The protein resides in the cytoplasm. The catalysed reaction is tRNA(Lys) + L-lysine + ATP = L-lysyl-tRNA(Lys) + AMP + diphosphate. The protein is Lysine--tRNA ligase of Clostridium perfringens (strain 13 / Type A).